The following is a 515-amino-acid chain: Ent-isokaurene C2/C3-hydroxylase (515 aa).

Residues L5 to S25 form a helical membrane-spanning segment. A heme-binding site is contributed by C452.

This sequence belongs to the cytochrome P450 family. Heme serves as cofactor.

Its subcellular location is the membrane. It carries out the reaction ent-isokaurene + 2 reduced [NADPH--hemoprotein reductase] + 2 O2 = ent-isokaurene-2beta,3beta-diol + 2 oxidized [NADPH--hemoprotein reductase] + 2 H2O + 2 H(+). Functionally, enzyme of the diterpenoid metabolism involved in the biosynthesis of antibacterial oryzalides such as phytocassane. The chain is Ent-isokaurene C2/C3-hydroxylase (CYP71Z6) from Oryza sativa subsp. japonica (Rice).